A 177-amino-acid polypeptide reads, in one-letter code: Large ribosomal subunit protein uL6 (177 aa).

This sequence belongs to the universal ribosomal protein uL6 family. Part of the 50S ribosomal subunit.

Functionally, this protein binds to the 23S rRNA, and is important in its secondary structure. It is located near the subunit interface in the base of the L7/L12 stalk, and near the tRNA binding site of the peptidyltransferase center. The sequence is that of Large ribosomal subunit protein uL6 from Rickettsia conorii (strain ATCC VR-613 / Malish 7).